The sequence spans 312 residues: Dihydroorotate dehydrogenase B (NAD(+)), catalytic subunit (312 aa).

Residues Ser23 and 47 to 48 (KA) contribute to the FMN site. Substrate contacts are provided by residues Lys47 and 71–75 (NAIGL). Asn102 and Asn130 together coordinate FMN. A substrate-binding site is contributed by Asn130. Cys133 acts as the Nucleophile in catalysis. FMN-binding residues include Lys168 and Ile194. 195 to 196 (NT) lines the substrate pocket. Residues Gly220, 246–247 (GG), and 268–269 (GT) each bind FMN.

It belongs to the dihydroorotate dehydrogenase family. Type 1 subfamily. Heterotetramer of 2 PyrK and 2 PyrD type B subunits. The cofactor is FMN.

It is found in the cytoplasm. It carries out the reaction (S)-dihydroorotate + NAD(+) = orotate + NADH + H(+). The protein operates within pyrimidine metabolism; UMP biosynthesis via de novo pathway; orotate from (S)-dihydroorotate (NAD(+) route): step 1/1. Catalyzes the conversion of dihydroorotate to orotate with NAD(+) as electron acceptor. The polypeptide is Dihydroorotate dehydrogenase B (NAD(+)), catalytic subunit (pyrDB) (Enterococcus faecalis (strain ATCC 700802 / V583)).